Reading from the N-terminus, the 161-residue chain is Transcription elongation factor GreA (161 aa).

The stretch at 45–72 forms a coiled coil; it reads NAEYHSAKEKLKLIDIQIAELNAVISKA.

The protein belongs to the GreA/GreB family.

Functionally, necessary for efficient RNA polymerase transcription elongation past template-encoded arresting sites. The arresting sites in DNA have the property of trapping a certain fraction of elongating RNA polymerases that pass through, resulting in locked ternary complexes. Cleavage of the nascent transcript by cleavage factors such as GreA or GreB allows the resumption of elongation from the new 3'terminus. GreA releases sequences of 2 to 3 nucleotides. The sequence is that of Transcription elongation factor GreA from Aliarcobacter butzleri (strain RM4018) (Arcobacter butzleri).